The sequence spans 73 residues: DNA-directed RNA polymerase subunit omega (73 aa).

Belongs to the RNA polymerase subunit omega family. The RNAP catalytic core consists of 2 alpha, 1 beta, 1 beta' and 1 omega subunit. When a sigma factor is associated with the core the holoenzyme is formed, which can initiate transcription.

It catalyses the reaction RNA(n) + a ribonucleoside 5'-triphosphate = RNA(n+1) + diphosphate. Its function is as follows. Promotes RNA polymerase assembly. Latches the N- and C-terminal regions of the beta' subunit thereby facilitating its interaction with the beta and alpha subunits. This Lactobacillus delbrueckii subsp. bulgaricus (strain ATCC BAA-365 / Lb-18) protein is DNA-directed RNA polymerase subunit omega.